The chain runs to 139 residues: MLIPRRVKHRKQHHPKRRGMAKGGTQVAFGEYGIQALTPAYVTNRQIEAARIAMTRHIKRGGKVWINIYPDRPLTKKPAETRMGSGKGSPEWWIANVHPGRVMFELSYPNEKIAREALTRAAHKLPMKCRIVKREAGEA.

The span at 1-20 (MLIPRRVKHRKQHHPKRRGM) shows a compositional bias: basic residues. Residues 1–22 (MLIPRRVKHRKQHHPKRRGMAK) form a disordered region.

Belongs to the universal ribosomal protein uL16 family. In terms of assembly, part of the 50S ribosomal subunit.

In terms of biological role, binds 23S rRNA and is also seen to make contacts with the A and possibly P site tRNAs. The protein is Large ribosomal subunit protein uL16 of Streptomyces coelicolor (strain ATCC BAA-471 / A3(2) / M145).